We begin with the raw amino-acid sequence, 96 residues long: Aspartyl/glutamyl-tRNA(Asn/Gln) amidotransferase subunit C (96 aa).

It belongs to the GatC family. In terms of assembly, heterotrimer of A, B and C subunits.

It carries out the reaction L-glutamyl-tRNA(Gln) + L-glutamine + ATP + H2O = L-glutaminyl-tRNA(Gln) + L-glutamate + ADP + phosphate + H(+). It catalyses the reaction L-aspartyl-tRNA(Asn) + L-glutamine + ATP + H2O = L-asparaginyl-tRNA(Asn) + L-glutamate + ADP + phosphate + 2 H(+). Functionally, allows the formation of correctly charged Asn-tRNA(Asn) or Gln-tRNA(Gln) through the transamidation of misacylated Asp-tRNA(Asn) or Glu-tRNA(Gln) in organisms which lack either or both of asparaginyl-tRNA or glutaminyl-tRNA synthetases. The reaction takes place in the presence of glutamine and ATP through an activated phospho-Asp-tRNA(Asn) or phospho-Glu-tRNA(Gln). The protein is Aspartyl/glutamyl-tRNA(Asn/Gln) amidotransferase subunit C of Aliarcobacter butzleri (strain RM4018) (Arcobacter butzleri).